The following is a 315-amino-acid chain: NADH-ubiquinone oxidoreductase chain 1 (315 aa).

Transmembrane regions (helical) follow at residues 6–26 (FILS…SVAF), 80–100 (ISPI…PFFV), 107–127 (LGGL…MIAG), 153–173 (LALI…MYFF), 177–197 (IYIW…TISL), 229–249 (LIFM…CVIF), 253–273 (DVFN…FIWA), and 292–312 (CFLS…ILLF).

This sequence belongs to the complex I subunit 1 family.

The protein resides in the mitochondrion inner membrane. It catalyses the reaction a ubiquinone + NADH + 5 H(+)(in) = a ubiquinol + NAD(+) + 4 H(+)(out). Its function is as follows. Core subunit of the mitochondrial membrane respiratory chain NADH dehydrogenase (Complex I) that is believed to belong to the minimal assembly required for catalysis. Complex I functions in the transfer of electrons from NADH to the respiratory chain. The immediate electron acceptor for the enzyme is believed to be ubiquinone. The protein is NADH-ubiquinone oxidoreductase chain 1 (mt:ND1) of Drosophila persimilis (Fruit fly).